Consider the following 262-residue polypeptide: 5'-nucleotidase SurE (262 aa).

A divalent metal cation is bound by residues D11, D12, S43, and N101. Positions 220–229 (SAGDGPKEWP) are enriched in basic and acidic residues. The disordered stretch occupies residues 220–246 (SAGDGPKEWPSDVSQIETNSPSLTPIQ). Residues 231–244 (DVSQIETNSPSLTP) show a composition bias toward polar residues.

This sequence belongs to the SurE nucleotidase family. A divalent metal cation serves as cofactor.

It is found in the cytoplasm. The enzyme catalyses a ribonucleoside 5'-phosphate + H2O = a ribonucleoside + phosphate. Functionally, nucleotidase that shows phosphatase activity on nucleoside 5'-monophosphates. This chain is 5'-nucleotidase SurE, found in Prochlorococcus marinus (strain SARG / CCMP1375 / SS120).